The sequence spans 569 residues: Thiol:disulfide interchange protein DsbD (569 aa).

An N-terminal signal peptide occupies residues 1–19; that stretch reads MAQRILTLILLLCSTSAFA. Intrachain disulfides connect cysteine 122-cysteine 128 and cysteine 187-cysteine 309. The next 7 membrane-spanning stretches (helical) occupy residues 168–188, 213–233, 248–268, 301–321, 328–348, 362–382, and 391–411; these read LPFS…TPCV, LLTF…GLVV, YVLI…FGLF, IAGL…LLYI, WLGG…LILI, WMEH…VFLL, and GLRL…ITSL. The Thioredoxin domain maps to 430-569; sequence LVSVRPLQDW…FSAHLRDRQP (140 aa). Cysteine 484 and cysteine 487 form a disulfide bridge.

Belongs to the thioredoxin family. DsbD subfamily.

Its subcellular location is the cell inner membrane. The catalysed reaction is [protein]-dithiol + NAD(+) = [protein]-disulfide + NADH + H(+). It carries out the reaction [protein]-dithiol + NADP(+) = [protein]-disulfide + NADPH + H(+). Its function is as follows. Required to facilitate the formation of correct disulfide bonds in some periplasmic proteins and for the assembly of the periplasmic c-type cytochromes. Acts by transferring electrons from cytoplasmic thioredoxin to the periplasm. This transfer involves a cascade of disulfide bond formation and reduction steps. The polypeptide is Thiol:disulfide interchange protein DsbD (Citrobacter koseri (strain ATCC BAA-895 / CDC 4225-83 / SGSC4696)).